The chain runs to 437 residues: 5-hydroxytryptamine receptor 3B (437 aa).

A signal peptide spans 1 to 21 (MILLWSCLLVAVVGILGTATP). The Extracellular segment spans residues 22–238 (QPGNSSLHRL…VVIRRCPLAY (217 aa)). 3 N-linked (GlcNAc...) asparagine glycosylation sites follow: Asn25, Asn92, and Asn134. Cys151 and Cys165 form a disulfide bridge. A helical membrane pass occupies residues 239–259 (VVSLLIPSIFLMLVDLGSFYL). Topologically, residues 260–264 (PPNCR) are cytoplasmic. The helical transmembrane segment at 265 to 282 (ARIVFKTNVLVGYTVFRV) threads the bilayer. N-linked (GlcNAc...) asparagine glycosylation occurs at Asn283. Over 283–292 (NMSDEVPRSA) the chain is Extracellular. The helical transmembrane segment at 293–313 (GCTPLIGVFFTVCMALLVLSL) threads the bilayer. Over 314 to 410 (SKSILLIKFL…WLAILYRFDQ (97 aa)) the chain is Cytoplasmic. Positions 377 to 409 (FWFQFRSINNSLRTRDQIHQKEVEWLAILYRFD) are HA-stretch; determines single-channel conductance in 5-HT3 receptors. A helical membrane pass occupies residues 411 to 431 (LLFRIYLAVLGLYTVTLCSLW). Residues 432 to 437 (ALWSRM) lie on the Extracellular side of the membrane.

Belongs to the ligand-gated ion channel (TC 1.A.9) family. 5-hydroxytryptamine receptor (TC 1.A.9.2) subfamily. HTR3B sub-subfamily. Forms homopentameric as well as heteropentameric serotonin-activated cation-selective channel complexes with HTR3A. The homomeric complex is not functional. Heteropentameric complexes display properties which resemble that of neuronal serotonin-activated channels in vivo. In terms of processing, N-glycosylation is required for membrane localization.

It is found in the postsynaptic cell membrane. Its subcellular location is the cell membrane. The enzyme catalyses Na(+)(in) = Na(+)(out). The catalysed reaction is K(+)(in) = K(+)(out). It catalyses the reaction Ca(2+)(in) = Ca(2+)(out). Its function is as follows. Forms serotonin (5-hydroxytryptamine/5-HT3)-activated cation-selective channel complexes, which when activated cause fast, depolarizing responses in neurons. In Mus musculus (Mouse), this protein is 5-hydroxytryptamine receptor 3B.